Reading from the N-terminus, the 505-residue chain is Sodium-coupled neutral amino acid transporter 3 (505 aa).

Residues 27 to 48 (VPTTDTQRTEDTQHCGEGKGFL) form a disordered region. Positions 33–43 (QRTEDTQHCGE) are enriched in basic and acidic residues. An N-linked (GlcNAc...) asparagine glycan is attached at Asn-73. A run of 5 helical transmembrane segments spans residues 82–102 (GILG…LFLL), 105–125 (VALL…IVGI), 143–163 (AAAL…LYII), 186–206 (MDGN…LALM), and 212–232 (LGYS…AVIY). Cys-239 and Cys-276 are disulfide-bonded. N-linked (GlcNAc...) asparagine glycans are attached at residues Asn-247 and Asn-251. Residues 288–308 (AYTIPIMAFAFVCHPEVLPIY) form a helical membrane-spanning segment. Asn-324 carries N-linked (GlcNAc...) asparagine glycosylation. The next 5 helical transmembrane spans lie at 325-345 (LSIA…YLTF), 367-387 (ILCV…IVLF), 409-429 (VLIA…APNI), 432-452 (IFGI…PAIF), and 472-492 (ALCF…FIII).

It belongs to the amino acid/polyamine transporter 2 family. Expressed predominantly in liver, moderately expressed in kidney and brain, and barely detectable in heart and muscle. Within liver, expressed in hepatocytes. Not detected in testis. Expressed in cells of the ganglion cell layer, in soma of some cells of the inner nuclear layer (at protein level). Expressed in the inner segments of photoreceptor cells.

The protein resides in the cell membrane. The protein localises to the basolateral cell membrane. The enzyme catalyses L-histidine(out) + Na(+)(out) + H(+)(in) = L-histidine(in) + Na(+)(in) + H(+)(out). It catalyses the reaction L-glutamine(out) + Na(+)(out) + H(+)(in) = L-glutamine(in) + Na(+)(in) + H(+)(out). It carries out the reaction L-asparagine(out) + Na(+)(out) + H(+)(in) = L-asparagine(in) + Na(+)(in) + H(+)(out). In terms of biological role, symporter that cotransports specific neutral amino acids and sodium ions, coupled to an H(+) antiporter activity. Mainly participates in the glutamate-GABA-glutamine cycle in brain where it transports L-glutamine from astrocytes in the intercellular space for the replenishment of both neurotransmitters glutamate and gamma-aminobutyric acid (GABA) in neurons and also functions as the major influx transporter in ganglion cells mediating the uptake of glutamine. The transport activity is specific for L-glutamine, L-histidine and L-asparagine. The transport is electroneutral coupled to the cotransport of 1 Na(+) and the antiport of 1 H(+). The transport is pH dependent, saturable, Li(+) tolerant and functions in both direction depending on the concentration gradients of its substrates and cotransported ions. Also mediates an amino acid-gated H(+) conductance that is not stoichiometrically coupled to the amino acid transport but which influences the ionic gradients that drive the amino acid transport. In addition, may play a role in nitrogen metabolism, amino acid homeostasis, glucose metabolism and renal ammoniagenesis. This is Sodium-coupled neutral amino acid transporter 3 from Mus musculus (Mouse).